The following is a 354-amino-acid chain: Biotin synthase (354 aa).

Residues 64–282 form the Radical SAM core domain; the sequence is GDVELATLLS…IAVARITMPR (219 aa). Residues Cys79, Cys83, and Cys86 each coordinate [4Fe-4S] cluster. Cys123, Cys154, Cys214, and Arg286 together coordinate [2Fe-2S] cluster.

Belongs to the radical SAM superfamily. Biotin synthase family. Homodimer. [4Fe-4S] cluster is required as a cofactor. The cofactor is [2Fe-2S] cluster.

The catalysed reaction is (4R,5S)-dethiobiotin + (sulfur carrier)-SH + 2 reduced [2Fe-2S]-[ferredoxin] + 2 S-adenosyl-L-methionine = (sulfur carrier)-H + biotin + 2 5'-deoxyadenosine + 2 L-methionine + 2 oxidized [2Fe-2S]-[ferredoxin]. The protein operates within cofactor biosynthesis; biotin biosynthesis; biotin from 7,8-diaminononanoate: step 2/2. Its function is as follows. Catalyzes the conversion of dethiobiotin (DTB) to biotin by the insertion of a sulfur atom into dethiobiotin via a radical-based mechanism. The polypeptide is Biotin synthase (Paracidovorax citrulli (strain AAC00-1) (Acidovorax citrulli)).